The chain runs to 577 residues: MFS-type transporter CPUR_05422 (577 aa).

The segment at 1 to 49 (MSAMSAMGKPEHGSATTSDLEHRATESSLEKQDVEAAPPGPVKPVDPSP) is disordered. Residues 19–34 (DLEHRATESSLEKQDV) show a composition bias toward basic and acidic residues. Over residues 38-47 (PPGPVKPVDP) the composition is skewed to pro residues. The next 14 helical transmembrane spans lie at 52 to 72 (STLK…LVAV), 93 to 113 (DVGW…LLFG), 123 to 143 (VVLL…GAAP), 157 to 177 (VGSA…IPLA), 184 to 204 (GLMG…GGAF), 212 to 232 (WCFY…FFYF), 249 to 269 (ILSL…CLLL), 285 to 305 (IIVL…VQIC), 326 to 346 (FLTT…IPIW), 359 to 379 (GIQL…GGLL), 383 to 403 (IGYY…GAGL), 416 to 436 (VIGY…TPNL), 449 to 469 (MGIA…VAVG), and 525 to 545 (VFIV…CMEW). A disordered region spans residues 554-577 (PPAGPPAGAPTESAPVETKAAGHT).

Belongs to the major facilitator superfamily. TCR/Tet family.

The protein resides in the membrane. In terms of biological role, MFS-type transporter; part of the ergochrome gene cluster responsible for the typical purple-black color of the ergot sclerotia. The ergochrome gene cluster produces several ergot pigments including the yellow ergochrome secalonic acid and its derivatives, as well as the red anthraquinones endocrocin and clavorubin. This chain is MFS-type transporter CPUR_05422, found in Claviceps purpurea (strain 20.1) (Ergot fungus).